The chain runs to 456 residues: MQPKTFVHQLHAILLEPEVNKWIYWSPTDNTVFFLKPYDPNFSTHVLKRYFKHGNVNSFVRQLHMYGFHKLSHPSPDQSSANNGNVKELVEWKFTHPSGFFFKEANAGILNKIQRKSTGVGKDGKRKNILSPISVSYVDASRLNVLSQQSGPVSAREPSNMFMGSPVHYSTSQSPPHISIPQQQQSSGPYLISSLPPQQPTVNMMRRQSISARMMNSYDYPNQFSTQDSIVQPQQPQQVLSPQALSGPPMKKSGTLSSTDDLKTTSLPIVNYPMPYHPGAFAQQQQQQQQPLPTVPPYSSYSTPFPSMMNSLSNSASNSPALGVCNNNVTLPKKSNISERQALDNHIQTLKNSLSTITDLIEKHINSASQDENKTLTNDAMNKDLRTSLSLLQNSKEEIIQLESKWMSMQSVKTTALPLQETTNTSSTLTSLTSSIIPKSIPIITKGEVATKPASY.

A DNA-binding region spans residues 3 to 118 (PKTFVHQLHA…ILNKIQRKST (116 aa)). Positions 229–299 (SIVQPQQPQQ…QPLPTVPPYS (71 aa)) are disordered. Low complexity-rich tracts occupy residues 231–246 (VQPQQPQQVLSPQALS), 253–267 (SGTLSSTDDLKTTSL), and 283–299 (QQQQQQQQPLPTVPPYS).

The protein belongs to the HSF family.

It localises to the nucleus. The chain is Protein MGA1 (MGA1) from Saccharomyces cerevisiae (strain ATCC 204508 / S288c) (Baker's yeast).